Here is a 507-residue protein sequence, read N- to C-terminus: Cytochrome P450 71A4 (507 aa).

The helical transmembrane segment at 3–23 (VPCLWYSLLILLLLFIFLLIH) threads the bilayer. Cys448 serves as a coordination point for heme.

It belongs to the cytochrome P450 family. Heme is required as a cofactor.

It is found in the membrane. May have a role in maturation, such as during flavor formation or other metabolite production specific to aging tissues. This Solanum melongena (Eggplant) protein is Cytochrome P450 71A4 (CYP71A4).